A 484-amino-acid chain; its full sequence is Cathepsin F (484 aa).

An N-terminal signal peptide occupies residues 1–19 (MAPWLQLLSLLGLLPGAVA). A propeptide spans 20 to 270 (APAQPRAASF…MKQAKSVGDL (251 aa)) (activation peptide). Residues Asn-160 and Asn-195 are each glycosylated (N-linked (GlcNAc...) asparagine). 2 disulfides stabilise this stretch: Cys-292–Cys-333 and Cys-326–Cys-366. Cys-295 is an active-site residue. N-linked (GlcNAc...) asparagine glycosylation is found at Asn-367 and Asn-378. Cys-424 and Cys-472 are disulfide-bonded. The active site involves His-431. Residue Asn-440 is glycosylated (N-linked (GlcNAc...) asparagine). The active site involves Asn-451.

This sequence belongs to the peptidase C1 family. High expression levels in heart, skeletal muscle, brain, testis and ovary; moderate levels in prostate, placenta, liver and colon; and no detectable expression in peripheral leukocytes and thymus.

It is found in the lysosome. The enzyme catalyses The recombinant enzyme cleaves synthetic substrates with Phe and Leu (better than Val) in P2, with high specificity constant (kcat/Km) comparable to that of cathepsin L.. Thiol protease which is believed to participate in intracellular degradation and turnover of proteins. Has also been implicated in tumor invasion and metastasis. The polypeptide is Cathepsin F (CTSF) (Homo sapiens (Human)).